The primary structure comprises 849 residues: Probable receptor-like protein kinase At1g30570 (849 aa).

Positions 1–28 (MSKLRKKYLEHLLCVLIFFTYVIGYGEA) are cleaved as a signal peptide. The Extracellular portion of the chain corresponds to 29–429 (QSKSFLVDCG…GHSVSDSKMR (401 aa)). Asn-40, Asn-57, Asn-94, Asn-122, Asn-158, Asn-268, Asn-271, Asn-305, and Asn-343 each carry an N-linked (GlcNAc...) asparagine glycan. A helical transmembrane segment spans residues 430–450 (IIWISVGAGIAIIIFFVFLGI). Residues 451–849 (LVVCLCKKRR…QTGSALHNSA (399 aa)) are Cytoplasmic-facing. The region spanning 520–793 (FDDGLAIGVG…GEVLWSLEYV (274 aa)) is the Protein kinase domain. ATP-binding positions include 526–534 (IGVGGFGKV) and Lys-548. Residue Asp-644 is the Proton acceptor of the active site. The tract at residues 810–849 (FSSSQAVEEAPESFTLPACSNQDSSETEQSQTGSALHNSA) is disordered. Over residues 827-849 (ACSNQDSSETEQSQTGSALHNSA) the composition is skewed to polar residues.

It belongs to the protein kinase superfamily. Ser/Thr protein kinase family.

It localises to the cell membrane. This Arabidopsis thaliana (Mouse-ear cress) protein is Probable receptor-like protein kinase At1g30570.